Reading from the N-terminus, the 1955-residue chain is 227 kDa spindle- and centromere-associated protein (1955 aa).

Coiled coils occupy residues 82–129 (KKRI…NDDV), 152–317 (EWAS…ELES), 385–1747 (VRNI…LIAL), and 1770–1813 (ERIV…ERFI). Disordered stretches follow at residues 1865 to 1896 (PTEQ…SYTY) and 1912 to 1955 (MTSS…TFSE). The segment covering 1878–1896 (RTSSTIKSSEGTTRESYTY) has biased composition (polar residues). Residues 1938–1948 (RKSRPATRKQQ) are compositionally biased toward basic residues.

It is found in the cytoplasm. The protein localises to the cytoskeleton. It localises to the microtubule organizing center. Its subcellular location is the centrosome. The protein resides in the chromosome. It is found in the centromere. The protein localises to the kinetochore. It localises to the spindle. Its function is as follows. May play a role in the organization of the spindle apparatus and its interaction with the centromeres. This is 227 kDa spindle- and centromere-associated protein (PUMA1) from Parascaris univalens (Nematode worm).